The following is a 156-amino-acid chain: Ribonuclease pancreatic (156 aa).

A signal peptide spans Met-1 to Gly-28. Residues Lys-35 and Arg-38 each coordinate substrate. His-40 acts as the Proton acceptor in catalysis. 4 disulfides stabilise this stretch: Cys-54–Cys-112, Cys-68–Cys-123, Cys-86–Cys-138, and Cys-93–Cys-100. The N-linked (GlcNAc...) asparagine glycan is linked to Asn-62. Lys-69–Thr-73 is a binding site for substrate. The N-linked (GlcNAc...) asparagine glycan is linked to Asn-90. The substrate site is built by Lys-94 and Arg-113. His-147 (proton donor) is an active-site residue.

The protein belongs to the pancreatic ribonuclease family. As to quaternary structure, monomer. Interacts with and forms tight 1:1 complexes with RNH1. Dimerization of two such complexes may occur. Interaction with RNH1 inhibits this protein.

The protein resides in the secreted. It carries out the reaction an [RNA] containing cytidine + H2O = an [RNA]-3'-cytidine-3'-phosphate + a 5'-hydroxy-ribonucleotide-3'-[RNA].. The catalysed reaction is an [RNA] containing uridine + H2O = an [RNA]-3'-uridine-3'-phosphate + a 5'-hydroxy-ribonucleotide-3'-[RNA].. Functionally, endonuclease that catalyzes the cleavage of RNA on the 3' side of pyrimidine nucleotides. Acts on single-stranded and double-stranded RNA. This chain is Ribonuclease pancreatic (RNASE1), found in Lagothrix lagotricha (Brown woolly monkey).